A 652-amino-acid polypeptide reads, in one-letter code: DNA ligase (652 aa).

NAD(+) is bound by residues 29–33 (DQEYD), 78–79 (SL), and E107. K109 serves as the catalytic N6-AMP-lysine intermediate. Residues R130, E164, K278, and K302 each contribute to the NAD(+) site. Zn(2+) contacts are provided by C395, C398, C413, and C418. The 76-residue stretch at 577–652 (DTSAQLFGLT…VKDENWLLQL (76 aa)) folds into the BRCT domain.

Belongs to the NAD-dependent DNA ligase family. LigA subfamily. The cofactor is Mg(2+). Requires Mn(2+) as cofactor.

The enzyme catalyses NAD(+) + (deoxyribonucleotide)n-3'-hydroxyl + 5'-phospho-(deoxyribonucleotide)m = (deoxyribonucleotide)n+m + AMP + beta-nicotinamide D-nucleotide.. Functionally, DNA ligase that catalyzes the formation of phosphodiester linkages between 5'-phosphoryl and 3'-hydroxyl groups in double-stranded DNA using NAD as a coenzyme and as the energy source for the reaction. It is essential for DNA replication and repair of damaged DNA. The protein is DNA ligase of Streptococcus uberis (strain ATCC BAA-854 / 0140J).